A 487-amino-acid polypeptide reads, in one-letter code: Serine/threonine-protein kinase BSK7 (487 aa).

Residue Gly2 is the site of N-myristoyl glycine attachment. The region spanning 59–325 is the Protein kinase domain; the sequence is ENIVSEHGEK…DLETPSHQLM (267 aa). ATP contacts are provided by residues 65-73 and Lys87; that span reads HGEKAPNVV. Asp181 acts as the Proton acceptor in catalysis.

It belongs to the protein kinase superfamily. Ser/Thr protein kinase family.

It is found in the cell membrane. The enzyme catalyses L-seryl-[protein] + ATP = O-phospho-L-seryl-[protein] + ADP + H(+). It carries out the reaction L-threonyl-[protein] + ATP = O-phospho-L-threonyl-[protein] + ADP + H(+). Functionally, probable serine/threonine kinase that acts as a positive regulator of brassinosteroid (BR) signaling downstream of the receptor kinase BRI1. Functions redundantly with BSK3, BSK5, BSK6 and BSK8. The sequence is that of Serine/threonine-protein kinase BSK7 from Arabidopsis thaliana (Mouse-ear cress).